The chain runs to 195 residues: Phosphoheptose isomerase (195 aa).

The SIS domain occupies 35–195 (IVSKILQAGN…IVEYNLFKME (161 aa)). 51 to 53 (NGG) is a binding site for substrate. Zn(2+) is bound by residues H60 and E64. Substrate is bound by residues E64, 95–96 (ND), 121–123 (STS), S126, and Q173. Positions 173 and 181 each coordinate Zn(2+).

This sequence belongs to the SIS family. GmhA subfamily. Zn(2+) is required as a cofactor.

The protein localises to the cytoplasm. The enzyme catalyses 2 D-sedoheptulose 7-phosphate = D-glycero-alpha-D-manno-heptose 7-phosphate + D-glycero-beta-D-manno-heptose 7-phosphate. It participates in carbohydrate biosynthesis; D-glycero-D-manno-heptose 7-phosphate biosynthesis; D-glycero-alpha-D-manno-heptose 7-phosphate and D-glycero-beta-D-manno-heptose 7-phosphate from sedoheptulose 7-phosphate: step 1/1. In terms of biological role, catalyzes the isomerization of sedoheptulose 7-phosphate in D-glycero-D-manno-heptose 7-phosphate. The chain is Phosphoheptose isomerase from Leptospira interrogans serogroup Icterohaemorrhagiae serovar copenhageni (strain Fiocruz L1-130).